Consider the following 968-residue polypeptide: C-1-tetrahydrofolate synthase, cytoplasmic (968 aa).

Residues 1-338 (MSAQYQRFLK…ERLAKSQWAL (338 aa)) are methylenetetrahydrofolate dehydrogenase and cyclohydrolase. Substrate is bound by residues 86–90 (YIRMK) and 133–135 (VQM). Residues 205–207 (GRS) and S230 each bind NADP(+). A substrate-binding site is contributed by 305–309 (PGGVG). Residues 339-968 (QTLPLKPQRP…TETGEIEGLF (630 aa)) form a formyltetrahydrofolate synthetase region. 413-420 (TPLGEGKT) contributes to the ATP binding site.

The protein in the N-terminal section; belongs to the tetrahydrofolate dehydrogenase/cyclohydrolase family. This sequence in the C-terminal section; belongs to the formate--tetrahydrofolate ligase family. In terms of assembly, homodimer. In terms of tissue distribution, present in all tissues.

It is found in the cytoplasm. It carries out the reaction (6R)-5,10-methylene-5,6,7,8-tetrahydrofolate + NADP(+) = (6R)-5,10-methenyltetrahydrofolate + NADPH. The enzyme catalyses (6R)-5,10-methenyltetrahydrofolate + H2O = (6R)-10-formyltetrahydrofolate + H(+). The catalysed reaction is (6S)-5,6,7,8-tetrahydrofolate + formate + ATP = (6R)-10-formyltetrahydrofolate + ADP + phosphate. The protein operates within one-carbon metabolism; tetrahydrofolate interconversion. This Drosophila melanogaster (Fruit fly) protein is C-1-tetrahydrofolate synthase, cytoplasmic (pug).